The chain runs to 258 residues: UPF0246 protein Shew_1093 (258 aa).

It belongs to the UPF0246 family.

The chain is UPF0246 protein Shew_1093 from Shewanella loihica (strain ATCC BAA-1088 / PV-4).